We begin with the raw amino-acid sequence, 199 residues long: Superoxide dismutase [Cu-Zn] (199 aa).

The N-terminal stretch at 1 to 22 is a signal peptide; that stretch reads MKLTKVALFSLGLFGFSSMALA. Positions 92, 94, and 117 each coordinate Cu cation. An intrachain disulfide couples Cys99 to Cys195. Zn(2+) contacts are provided by His117, His126, His135, and Asp138. His173 is a binding site for Cu cation.

Belongs to the Cu-Zn superoxide dismutase family. Homodimer. It depends on Cu cation as a cofactor. Requires Zn(2+) as cofactor.

It localises to the periplasm. The catalysed reaction is 2 superoxide + 2 H(+) = H2O2 + O2. Functionally, destroys radicals which are normally produced within the cells and which are toxic to biological systems. May play a role in the interactive biology of organisms with their hosts and so contribute to their capacity to cause disease. The chain is Superoxide dismutase [Cu-Zn] (sodC) from Haemophilus ducreyi (strain 35000HP / ATCC 700724).